The following is a 480-amino-acid chain: Glycogen synthase (480 aa).

ADP-alpha-D-glucose is bound at residue Lys-15.

This sequence belongs to the glycosyltransferase 1 family. Bacterial/plant glycogen synthase subfamily.

It catalyses the reaction [(1-&gt;4)-alpha-D-glucosyl](n) + ADP-alpha-D-glucose = [(1-&gt;4)-alpha-D-glucosyl](n+1) + ADP + H(+). It functions in the pathway glycan biosynthesis; glycogen biosynthesis. In terms of biological role, synthesizes alpha-1,4-glucan chains using ADP-glucose. The polypeptide is Glycogen synthase (Pasteurella multocida (strain Pm70)).